Consider the following 101-residue polypeptide: Venom protein 214 (101 aa).

A signal peptide spans 1-16; sequence MIRYVLVIITCFLVAA.

Post-translationally, contains 3 disulfide bonds. Expressed by the venom gland.

The protein localises to the secreted. This chain is Venom protein 214, found in Lychas mucronatus (Chinese swimming scorpion).